A 397-amino-acid polypeptide reads, in one-letter code: Elongation factor Tu (397 aa).

In terms of domain architecture, tr-type G spans 10–206 (KPHCNIGTIG…TIDEYVPDPE (197 aa)). The segment at 19–26 (GHVDHGKT) is G1. 19 to 26 (GHVDHGKT) lines the GTP pocket. Residue threonine 26 participates in Mg(2+) binding. The tract at residues 61–65 (GITIS) is G2. The interval 82-85 (DCPG) is G3. GTP-binding positions include 82–86 (DCPGH) and 137–140 (NKCD). The interval 137–140 (NKCD) is G4. Positions 175–177 (SAL) are G5.

This sequence belongs to the TRAFAC class translation factor GTPase superfamily. Classic translation factor GTPase family. EF-Tu/EF-1A subfamily. As to quaternary structure, monomer.

It is found in the cytoplasm. It catalyses the reaction GTP + H2O = GDP + phosphate + H(+). GTP hydrolase that promotes the GTP-dependent binding of aminoacyl-tRNA to the A-site of ribosomes during protein biosynthesis. The polypeptide is Elongation factor Tu (Lachnospira eligens (strain ATCC 27750 / DSM 3376 / VPI C15-48 / C15-B4) (Eubacterium eligens)).